A 121-amino-acid polypeptide reads, in one-letter code: MKSFVFALALIVAFACISESKSDHTGYEEEENLEDSELTDLVAAALLEELAEASEMDDLSYTEEAGGERMDKLEEMALKLKDKLKTMAEKGAQMGEKLKEMLPKAMEKLKELMEKMKNKMG.

The N-terminal stretch at 1 to 22 (MKSFVFALALIVAFACISESKS) is a signal peptide. The propeptide occupies 23–69 (DHTGYEEEENLEDSELTDLVAAALLEELAEASEMDDLSYTEEAGGER). At Met-120 the chain carries Methionine amide.

In terms of tissue distribution, expressed by the venom gland.

It localises to the secreted. In terms of biological role, shows no antimicrobial activity against Gram-positive bacterium B.subtilis B-501 or Gram-negative bacterium E.coli DH5-alpha at concentrations up to 20 ug/ml. Shows no toxicity towards insect (S.carnaria) larvae. This chain is Met-lysine-1b, found in Lachesana tarabaevi (Spider).